A 249-amino-acid polypeptide reads, in one-letter code: Indole-3-glycerol phosphate synthase (249 aa).

Belongs to the TrpC family.

The catalysed reaction is 1-(2-carboxyphenylamino)-1-deoxy-D-ribulose 5-phosphate + H(+) = (1S,2R)-1-C-(indol-3-yl)glycerol 3-phosphate + CO2 + H2O. It functions in the pathway amino-acid biosynthesis; L-tryptophan biosynthesis; L-tryptophan from chorismate: step 4/5. This is Indole-3-glycerol phosphate synthase from Pyrobaculum arsenaticum (strain DSM 13514 / JCM 11321 / PZ6).